The following is a 141-amino-acid chain: Putative pre-16S rRNA nuclease (141 aa).

This sequence belongs to the YqgF nuclease family.

It is found in the cytoplasm. Its function is as follows. Could be a nuclease involved in processing of the 5'-end of pre-16S rRNA. This Pseudomonas putida (strain ATCC 47054 / DSM 6125 / CFBP 8728 / NCIMB 11950 / KT2440) protein is Putative pre-16S rRNA nuclease.